A 319-amino-acid chain; its full sequence is Ankyrin repeat domain-containing protein 1 (319 aa).

Residues 55-89 (LGEEQRKSEKVREAELKKKKLEQRSKLENLEDLEI) are a coiled coil. ANK repeat units follow at residues 152 to 181 (YKRTALHRACLEGHLAIVEKLMEAGAQIEF), 185 to 214 (LESTAIHWACRGGNLDVLKLLLNKGAKISA), 218 to 247 (LLSTALHVAVRTGHYECAEHLIACEADLNA), 251 to 280 (EGDTPLHDAVRLNRYKMIRLLMTFGADLNV), and 284 to 315 (AGKTPMDLVLHWQNGTKAIFDSLKENAYKNSR).

In terms of assembly, interacts with TTN/titin. Interacts with YBX1. As to expression, expressed in heart, cardiac muscle.

It is found in the nucleus. Its function is as follows. May play an important role in endothelial cell activation. May act as a nuclear transcription factor that negatively regulates the expression of cardiac genes. This is Ankyrin repeat domain-containing protein 1 (Ankrd1) from Rattus norvegicus (Rat).